The sequence spans 87 residues: Tachykinin-1 (87 aa).

A signal peptide spans 1–22 (MIRVGLILCCIFIAGVFEASSA). A propeptide spanning residues 23-37 (DDMLTAHNLIKRSEV) is cleaved from the precursor. At Met-49 the chain carries Methionine amide. Positions 52-87 (SEELTRRLIQHPGSMSETSKRGPPKKVSRRPYILKK) are excised as a propeptide. The disordered stretch occupies residues 61–87 (QHPGSMSETSKRGPPKKVSRRPYILKK). Positions 73–87 (GPPKKVSRRPYILKK) are enriched in basic residues.

The protein belongs to the tachykinin family. Expressed in the posterior salivary gland and more specifically in the mucus-secreting gland cells.

It localises to the secreted. Functionally, tachykinins are active peptides which excite neurons, evoke behavioral responses, are potent vasodilators and secretagogues, and contract (directly or indirectly) many smooth muscles. This is Tachykinin-1 from Octopus vulgaris (Common octopus).